The following is a 59-amino-acid chain: Conotoxin ViVA (59 aa).

The first 19 residues, 1–19, serve as a signal peptide directing secretion; that stretch reads MRCVPVFIILLLLIPSASS. The propeptide occupies 20-46; sequence AAVQPKTEKDDVPLASVHDSALRILSR. Gln47 carries the post-translational modification Pyrrolidone carboxylic acid. Cystine bridges form between Cys48-Cys55 and Cys49-Cys56. Position 58 is an isoleucine amide (Ile58).

This sequence belongs to the conotoxin T superfamily. Expressed by the venom duct.

Its subcellular location is the secreted. The sequence is that of Conotoxin ViVA from Conus virgo (Virgin cone).